Here is a 455-residue protein sequence, read N- to C-terminus: Kynurenine 3-monooxygenase (455 aa).

Belongs to the aromatic-ring hydroxylase family. KMO subfamily. The cofactor is FAD.

The catalysed reaction is L-kynurenine + NADPH + O2 + H(+) = 3-hydroxy-L-kynurenine + NADP(+) + H2O. It participates in cofactor biosynthesis; NAD(+) biosynthesis; quinolinate from L-kynurenine: step 1/3. In terms of biological role, catalyzes the hydroxylation of L-kynurenine (L-Kyn) to form 3-hydroxy-L-kynurenine (L-3OHKyn). Required for synthesis of quinolinic acid. The chain is Kynurenine 3-monooxygenase from Xanthomonas oryzae pv. oryzae (strain KACC10331 / KXO85).